The primary structure comprises 1237 residues: MASVVGDDCNLDVMPPRKKKNKGSNKMQDKLNSNNNTGSKKSRKRKLNSNVNTVACKSQKRKLKKLEEDKEKEILFSKTAELLDKYKISEDVSSLLQSSKVIGRSATKLEKRRRAMQLSKAGVETEHSDESVEQNDNDDDSCMDEPTTPEHVEIETPTFVTDSEQQLVHADLMISAEESSSKLEVDDTVDMIPLTTCRDDDEDSMDGLIENEDVTVQGPRVPAFVVHVSRPAEVEETRKDLPIVMMEQEIMEAINRHPAVIISGQTGCGKTTQVPQFLYEAGFGSKQFSSRSGIIGITQPRRVAVLATAKRVAFELGVRLGKEVGFQVRYDKKIGENSSIKFMTDGILLREIQNDFLLRRYSVIILDEAHERSLNTDILIGMLTRVIKIRQEYYEEQQKSLQSGGTVTSECQITPLKLILMSATLRVEDFVSGKRLFPNIPPLIEVPTRQYPVTIHFSKKTEIVDYIGEAYKKVMSIHKKLPQGGILVFVTGQREVDYLCEKLRKSSKELVVQAAKRDAYVKKKCDDGSFGGVDMKEIAEAFDDDSNNQNSRFSSHGEDPSDIGDGNYDDDFEEEDMYESDEDRDWETVDDGFASSFVEEGKLDALRAAFNALADKNGSVSAEPAKSIAAENQEAEQVKNKFSPGKLRVLPLYAMLSPAAQLRVFEEVEKEERLVVVATNVAETSLTIPGIKYVVDTGRVKVKNYDSKTGMESYEVDWISQASASQRAGRAGRTGPGHCYRLYSSAVFSNIFEESSLPEIMKVPVDGVILLMKSMNIPKVENFPFPTPPEPSAIREAERCLKALEALDSNGGLTPLGKAMSHYPMSPRHSRMLLTVIQMLKETRNYSRANLILGYAVAAVAALSLPNPLIMEFEGEKKNESKDADKTVKQEDKQRKKDRKEKIKAARDRFSNPSSDALTVAYALHSFEVSENGMGFCEANGLHLKTMDEMSKLKDQLLRLVFNCCKPSETEDSFSWTHGTIQDVEKSWRITTSTSSKTPLLQNEEELLGEAICAGWADRVARKTRATEYQACAVQEPVFLHRWSSLINSAPELLVYSELLLTNRPYMHGATRVRPEWLVKHAKSLCVFSAPLKDPKPYYSSEEDRVLCWVVPSFGPHNWELPAHSVAITEDRDRAAAFGCALLQGEVLTCLKSFRALLAGKPETLLEREAWGLERVGSLVMVLTEKKIDTLESLRKNWEQNPNVLYSEIEVWFQKKFRHRVKDLWQTMLKEAHVRRS.

Disordered regions lie at residues methionine 1–valine 51 and alanine 115–threonine 148. A compositionally biased stretch (polar residues) spans serine 24 to glycine 38. The span at serine 131 to methionine 143 shows a compositional bias: acidic residues. Residues methionine 251–leucine 443 enclose the Helicase ATP-binding domain. Position 264 to 271 (glycine 264 to threonine 271) interacts with ATP. The DEAH box signature appears at aspartate 367–histidine 370. A disordered region spans residues aspartate 543–aspartate 585. Positions asparagine 567–aspartate 585 are enriched in acidic residues. The Helicase C-terminal domain occupies alanine 605–asparagine 776. Residues glutamate 876–phenylalanine 910 form a disordered region.

This sequence belongs to the DEAD box helicase family. DEAH subfamily.

It carries out the reaction ATP + H2O = ADP + phosphate + H(+). This Arabidopsis thaliana (Mouse-ear cress) protein is ATP-dependent RNA helicase DEAH13.